The following is a 109-amino-acid chain: Meiotically up-regulated gene 153 protein (109 aa).

The protein resides in the mitochondrion. Has a role in meiosis. This chain is Meiotically up-regulated gene 153 protein (mug153), found in Schizosaccharomyces pombe (strain 972 / ATCC 24843) (Fission yeast).